The chain runs to 708 residues: Ubiquitin thioesterase Zranb1 (708 aa).

Residues 3–33 form a RanBP2-type 1 zinc finger; sequence EHGIKWACEYCTYENWPSAIKCTMCRAQRPS. The Zn(2+) site is built by Cys-10, Cys-13, Cys-24, and Cys-27. The segment at 38 to 73 is disordered; that stretch reads TEDPFKSGSSDVGRDWDPSSTEGGSSPLICPDSSAR. RanBP2-type zinc fingers lie at residues 84–113 and 149–178; these read NANK…QRRT and RTQH…PRPN. Residues Cys-90, Cys-93, Cys-104, Cys-107, Cys-155, Cys-158, Cys-169, and Cys-172 each coordinate Zn(2+). The tract at residues 202–224 is disordered; sequence RWRGGCSSGNSQRRSPPTTKRDS. Over residues 209–219 the composition is skewed to polar residues; it reads SGNSQRRSPPT. ANK repeat units lie at residues 260 to 290 and 313 to 340; these read KKTD…SGGD and YTLV…QQAA. The region spanning 432 to 592 is the OTU domain; the sequence is LYALWNRTAG…RGHFSALVAM (161 aa). Cys-443 (nucleophile) is an active-site residue. Catalysis depends on His-585, which acts as the Proton acceptor.

This sequence belongs to the peptidase C64 family. Interacts with TRAF6. Interacts with APC.

It is found in the cytoplasm. It localises to the nucleus. It carries out the reaction Thiol-dependent hydrolysis of ester, thioester, amide, peptide and isopeptide bonds formed by the C-terminal Gly of ubiquitin (a 76-residue protein attached to proteins as an intracellular targeting signal).. In terms of biological role, ubiquitin thioesterase, which specifically hydrolyzes 'Lys-29'-linked and 'Lys-33'-linked diubiquitin. Also cleaves 'Lys-63'-linked chains, but with 40-fold less efficiency compared to 'Lys-29'-linked ones. Positive regulator of the Wnt signaling pathway that deubiquitinates APC protein, a negative regulator of Wnt-mediated transcription. Acts as a regulator of autophagy by mediating deubiquitination of PIK3C3/VPS34, thereby promoting autophagosome maturation. Plays a role in the regulation of cell morphology and cytoskeletal organization. Required in the stress fiber dynamics and cell migration. In Mus musculus (Mouse), this protein is Ubiquitin thioesterase Zranb1.